A 258-amino-acid polypeptide reads, in one-letter code: Protein STAY-GREEN LIKE, chloroplastic (258 aa).

This sequence belongs to the staygreen family. Strongly expressed in leaves, stems and panicles, and at lower levels in roots and seeds.

In terms of biological role, promotes chlorophyll degradation in leaves. May be involved in LHCI proteins degradation, regulating the balance between LHCI and LHCII. This chain is Protein STAY-GREEN LIKE, chloroplastic, found in Oryza sativa subsp. japonica (Rice).